Reading from the N-terminus, the 1213-residue chain is DNA-directed RNA polymerase subunit beta' (1213 aa).

Zn(2+) is bound by residues cysteine 60, cysteine 62, cysteine 75, and cysteine 78. The Mg(2+) site is built by aspartate 450, aspartate 452, and aspartate 454. Cysteine 819, cysteine 893, cysteine 900, and cysteine 903 together coordinate Zn(2+).

This sequence belongs to the RNA polymerase beta' chain family. As to quaternary structure, the RNAP catalytic core consists of 2 alpha, 1 beta, 1 beta' and 1 omega subunit. When a sigma factor is associated with the core the holoenzyme is formed, which can initiate transcription. Mg(2+) is required as a cofactor. Zn(2+) serves as cofactor.

The enzyme catalyses RNA(n) + a ribonucleoside 5'-triphosphate = RNA(n+1) + diphosphate. In terms of biological role, DNA-dependent RNA polymerase catalyzes the transcription of DNA into RNA using the four ribonucleoside triphosphates as substrates. The sequence is that of DNA-directed RNA polymerase subunit beta' from Streptococcus pyogenes serotype M6 (strain ATCC BAA-946 / MGAS10394).